Consider the following 93-residue polypeptide: Small ribosomal subunit protein uS19 (93 aa).

The protein belongs to the universal ribosomal protein uS19 family.

Functionally, protein S19 forms a complex with S13 that binds strongly to the 16S ribosomal RNA. The sequence is that of Small ribosomal subunit protein uS19 from Nitratidesulfovibrio vulgaris (strain ATCC 29579 / DSM 644 / CCUG 34227 / NCIMB 8303 / VKM B-1760 / Hildenborough) (Desulfovibrio vulgaris).